The sequence spans 51 residues: Large ribosomal subunit protein eL39 (51 aa).

This sequence belongs to the eukaryotic ribosomal protein eL39 family.

In Thermoplasma acidophilum (strain ATCC 25905 / DSM 1728 / JCM 9062 / NBRC 15155 / AMRC-C165), this protein is Large ribosomal subunit protein eL39 (rpl39e).